The following is a 437-amino-acid chain: 3-ketoacyl-CoA thiolase (437 aa).

The active-site Acyl-thioester intermediate is the Cys-99. Active-site proton acceptor residues include His-392 and Cys-422.

The protein belongs to the thiolase-like superfamily. Thiolase family. In terms of assembly, heterotetramer of two alpha chains (FadJ) and two beta chains (FadI).

Its subcellular location is the cytoplasm. It catalyses the reaction an acyl-CoA + acetyl-CoA = a 3-oxoacyl-CoA + CoA. It functions in the pathway lipid metabolism; fatty acid beta-oxidation. Its function is as follows. Catalyzes the final step of fatty acid oxidation in which acetyl-CoA is released and the CoA ester of a fatty acid two carbons shorter is formed. This Pectobacterium carotovorum subsp. carotovorum (strain PC1) protein is 3-ketoacyl-CoA thiolase.